A 424-amino-acid polypeptide reads, in one-letter code: UDP-N-acetylglucosamine 1-carboxyvinyltransferase (424 aa).

22-23 (KN) contacts phosphoenolpyruvate. UDP-N-acetyl-alpha-D-glucosamine is bound at residue arginine 93. The active-site Proton donor is cysteine 117. Cysteine 117 carries the post-translational modification 2-(S-cysteinyl)pyruvic acid O-phosphothioketal. UDP-N-acetyl-alpha-D-glucosamine-binding positions include 162–165 (KVSV), aspartate 307, and isoleucine 329.

This sequence belongs to the EPSP synthase family. MurA subfamily.

The protein localises to the cytoplasm. The enzyme catalyses phosphoenolpyruvate + UDP-N-acetyl-alpha-D-glucosamine = UDP-N-acetyl-3-O-(1-carboxyvinyl)-alpha-D-glucosamine + phosphate. Its pathway is cell wall biogenesis; peptidoglycan biosynthesis. In terms of biological role, cell wall formation. Adds enolpyruvyl to UDP-N-acetylglucosamine. The sequence is that of UDP-N-acetylglucosamine 1-carboxyvinyltransferase from Actinobacillus pleuropneumoniae serotype 5b (strain L20).